We begin with the raw amino-acid sequence, 320 residues long: Lipoyl synthase (320 aa).

Cys-56, Cys-61, Cys-67, Cys-82, Cys-86, Cys-89, and Ser-295 together coordinate [4Fe-4S] cluster. The 217-residue stretch at 68–284 (WNRRTATFMI…REEALKRGFA (217 aa)) folds into the Radical SAM core domain. The segment at 300–320 (EQSAQAVARRTGAGRAAQTGD) is disordered. Residues 303 to 320 (AQAVARRTGAGRAAQTGD) show a composition bias toward low complexity.

The protein belongs to the radical SAM superfamily. Lipoyl synthase family. [4Fe-4S] cluster serves as cofactor.

Its subcellular location is the cytoplasm. It catalyses the reaction [[Fe-S] cluster scaffold protein carrying a second [4Fe-4S](2+) cluster] + N(6)-octanoyl-L-lysyl-[protein] + 2 oxidized [2Fe-2S]-[ferredoxin] + 2 S-adenosyl-L-methionine + 4 H(+) = [[Fe-S] cluster scaffold protein] + N(6)-[(R)-dihydrolipoyl]-L-lysyl-[protein] + 4 Fe(3+) + 2 hydrogen sulfide + 2 5'-deoxyadenosine + 2 L-methionine + 2 reduced [2Fe-2S]-[ferredoxin]. It participates in protein modification; protein lipoylation via endogenous pathway; protein N(6)-(lipoyl)lysine from octanoyl-[acyl-carrier-protein]: step 2/2. Catalyzes the radical-mediated insertion of two sulfur atoms into the C-6 and C-8 positions of the octanoyl moiety bound to the lipoyl domains of lipoate-dependent enzymes, thereby converting the octanoylated domains into lipoylated derivatives. In Symbiobacterium thermophilum (strain DSM 24528 / JCM 14929 / IAM 14863 / T), this protein is Lipoyl synthase.